The following is a 130-amino-acid chain: Small ribosomal subunit protein uS9 (130 aa).

It belongs to the universal ribosomal protein uS9 family.

This chain is Small ribosomal subunit protein uS9, found in Albidiferax ferrireducens (strain ATCC BAA-621 / DSM 15236 / T118) (Rhodoferax ferrireducens).